Consider the following 314-residue polypeptide: tRNA uridine(34) hydroxylase (314 aa).

Positions 140–234 constitute a Rhodanese domain; it reads ARDDVILIDT…YLEETPPDES (95 aa). The active-site Cysteine persulfide intermediate is Cys194.

It belongs to the TrhO family.

It catalyses the reaction uridine(34) in tRNA + AH2 + O2 = 5-hydroxyuridine(34) in tRNA + A + H2O. Catalyzes oxygen-dependent 5-hydroxyuridine (ho5U) modification at position 34 in tRNAs. In Acinetobacter baumannii (strain SDF), this protein is tRNA uridine(34) hydroxylase.